The primary structure comprises 225 residues: Uridylate kinase (225 aa).

9–10 (GS) provides a ligand contact to ATP. G46 contacts UMP. Positions 47 and 51 each coordinate ATP. Residues D67 and 115-121 (THPAHTT) each bind UMP. ATP is bound by residues T141, N142, Y147, and D150.

Belongs to the UMP kinase family. In terms of assembly, homohexamer.

The protein resides in the cytoplasm. It catalyses the reaction UMP + ATP = UDP + ADP. It participates in pyrimidine metabolism; CTP biosynthesis via de novo pathway; UDP from UMP (UMPK route): step 1/1. Inhibited by UTP. Its function is as follows. Catalyzes the reversible phosphorylation of UMP to UDP. The chain is Uridylate kinase from Methanococcus maripaludis (strain C7 / ATCC BAA-1331).